Reading from the N-terminus, the 113-residue chain is Nucleoid-associated protein Syncc9605_0027 (113 aa).

It belongs to the YbaB/EbfC family. In terms of assembly, homodimer.

Its subcellular location is the cytoplasm. The protein resides in the nucleoid. Functionally, binds to DNA and alters its conformation. May be involved in regulation of gene expression, nucleoid organization and DNA protection. In Synechococcus sp. (strain CC9605), this protein is Nucleoid-associated protein Syncc9605_0027.